The primary structure comprises 205 residues: Holliday junction branch migration complex subunit RuvA (205 aa).

The interval M1–A64 is domain I. Residues N65–I143 are domain II. Positions G144–G152 are flexible linker. Positions A153–R205 are domain III.

This sequence belongs to the RuvA family. Homotetramer. Forms an RuvA(8)-RuvB(12)-Holliday junction (HJ) complex. HJ DNA is sandwiched between 2 RuvA tetramers; dsDNA enters through RuvA and exits via RuvB. An RuvB hexamer assembles on each DNA strand where it exits the tetramer. Each RuvB hexamer is contacted by two RuvA subunits (via domain III) on 2 adjacent RuvB subunits; this complex drives branch migration. In the full resolvosome a probable DNA-RuvA(4)-RuvB(12)-RuvC(2) complex forms which resolves the HJ.

The protein localises to the cytoplasm. In terms of biological role, the RuvA-RuvB-RuvC complex processes Holliday junction (HJ) DNA during genetic recombination and DNA repair, while the RuvA-RuvB complex plays an important role in the rescue of blocked DNA replication forks via replication fork reversal (RFR). RuvA specifically binds to HJ cruciform DNA, conferring on it an open structure. The RuvB hexamer acts as an ATP-dependent pump, pulling dsDNA into and through the RuvAB complex. HJ branch migration allows RuvC to scan DNA until it finds its consensus sequence, where it cleaves and resolves the cruciform DNA. This Brucella anthropi (strain ATCC 49188 / DSM 6882 / CCUG 24695 / JCM 21032 / LMG 3331 / NBRC 15819 / NCTC 12168 / Alc 37) (Ochrobactrum anthropi) protein is Holliday junction branch migration complex subunit RuvA.